The following is a 124-amino-acid chain: Large ribosomal subunit protein bL12c (124 aa).

Belongs to the bacterial ribosomal protein bL12 family. In terms of assembly, homodimer. Part of the ribosomal stalk of the 50S ribosomal subunit. Forms a multimeric L10(L12)X complex, where L10 forms an elongated spine to which 2 to 4 L12 dimers bind in a sequential fashion. Binds GTP-bound translation factors.

It localises to the plastid. The protein resides in the chloroplast. Functionally, forms part of the ribosomal stalk which helps the ribosome interact with GTP-bound translation factors. Is thus essential for accurate translation. In Cyanidioschyzon merolae (strain NIES-3377 / 10D) (Unicellular red alga), this protein is Large ribosomal subunit protein bL12c.